We begin with the raw amino-acid sequence, 301 residues long: Protease HtpX (301 aa).

Transmembrane regions (helical) follow at residues 4–24 (IGLFLLTNLAILVVLGVVLFI) and 44–64 (TGLLIIAAVIGFGGSFISLAM). H150 contributes to the Zn(2+) binding site. Residue E151 is part of the active site. Zn(2+) is bound at residue H154. 2 consecutive transmembrane segments (helical) span residues 165–185 (LIQGVVNTFVVFFSRIIGHFV) and 201–221 (FITSIFAQIVLGILASVIVMW). E227 serves as a coordination point for Zn(2+).

The protein belongs to the peptidase M48B family. Zn(2+) is required as a cofactor.

It localises to the cell inner membrane. The protein is Protease HtpX of Alkalilimnicola ehrlichii (strain ATCC BAA-1101 / DSM 17681 / MLHE-1).